The sequence spans 426 residues: Chordin-like protein 2 (426 aa).

The N-terminal stretch at 1-25 (MVPGVRIIPSLLGLVMFWLPLDSQA) is a signal peptide. VWFC domains follow at residues 31–96 (KVCL…PRCV) and 109–175 (KSCQ…QTCK). N114 is a glycosylation site (N-linked (GlcNAc...) asparagine). Position 182 is a phosphoserine (S182). Residues 182-191 (STEENLTQLQ) are compositionally biased toward polar residues. The disordered stretch occupies residues 182–216 (STEENLTQLQHGERHSQDPCSERRGPSTPAPTSLS). An N-linked (GlcNAc...) asparagine glycan is attached at N186. A compositionally biased stretch (basic and acidic residues) spans 192–206 (HGERHSQDPCSERRG). Residues 207 to 216 (PSTPAPTSLS) are compositionally biased toward low complexity. Positions 246–311 (KACTHNGKTY…VAGKCCKICP (66 aa)) constitute a VWFC 3 domain.

As to quaternary structure, interacts with GDF5. May interact with INHBA, BMP2, BMP4, BMP5, BMP6, and BMP7. In terms of tissue distribution, weakly expressed in the liver and kidney. In reproductive organs expressed in connective tissues such as ligaments of the ovary and oviduct in females, and of testis, epididymis and certain male accessory sex glands in males. Expression was high in uterine myometrium. Weakly expressed in cartilage of the femoral head, patella, articular facets of vertebrae, in the annulus fibrosus of intervertebral disks. In normal cartilage, expression was confined to articular chondrocytes especially in the superficial zone.

It is found in the secreted. Its function is as follows. Implicated in tumor angiogenesis. May inhibits BMPs activity by blocking their interaction with their receptors. Has a negative regulator effect on the cartilage formation/regeneration from immature mesenchymal cells, by preventing or reducing the rate of matrix accumulation. May play a role during myoblast and osteoblast differentiation, and maturation. This is Chordin-like protein 2 (Chrdl2) from Mus musculus (Mouse).